Reading from the N-terminus, the 355-residue chain is uncharacterized protein (355 aa).

The protein resides in the cytoplasm. This is an uncharacterized protein from Saccharomyces cerevisiae (strain ATCC 204508 / S288c) (Baker's yeast).